The primary structure comprises 491 residues: Non-structural protein 1 (491 aa).

Residues 1–81 form an RNA-binding region; that stretch reads MATFKDACYH…CFLDEEPHLL (81 aa). The interval 42–79 is zinc-binding domain; it reads CLDCCQHTDLTYCRGCALFHVCQWCSRYNRCFLDEEPH. The tract at residues 82 to 176 is important for cytoskeleton localization; sequence RMRTFRNEIN…ENQTPFHFVN (95 aa). The interval 320 to 491 is interaction with host IRF3; the sequence is DVNNCKWCKI…GYDYELSDIE (172 aa). Positions 485-488 match the pLxIS motif motif; that stretch reads YELS.

It belongs to the rotavirus NSP1 family. In terms of assembly, interacts (via C-terminus) with host IRF3; this interaction leads to IRF3 degradation. Interacts with host IRF7; this interaction leads to IRF7 degradation. Interacts with host CUL1 and CUL3.

It is found in the host cytoplasm. The protein localises to the host cytoskeleton. Its function is as follows. Plays a role in the inhibition of host innate immunity by inducing the degradation of key host factors required to activate interferon production such as IRF3, IRF5 or IRF7. Associates with components of cullin RING ligases (CRLs) including CUL1 or CUL3, which are essential multisubunit ubiquitination complexes, to modulate their activities. This Rotavirus A (isolate RVA/Cow/United States/B223/1983/G10P8[11]) (RV-A) protein is Non-structural protein 1.